A 361-amino-acid chain; its full sequence is Phosphoserine aminotransferase (361 aa).

Arg43 lines the L-glutamate pocket. Residues 77 to 78 (AS), Trp103, Thr153, Asp173, and Gln196 contribute to the pyridoxal 5'-phosphate site. Lys197 is modified (N6-(pyridoxal phosphate)lysine). Pyridoxal 5'-phosphate is bound at residue 238 to 239 (NT).

This sequence belongs to the class-V pyridoxal-phosphate-dependent aminotransferase family. SerC subfamily. As to quaternary structure, homodimer. Pyridoxal 5'-phosphate serves as cofactor.

The protein localises to the cytoplasm. It carries out the reaction O-phospho-L-serine + 2-oxoglutarate = 3-phosphooxypyruvate + L-glutamate. It catalyses the reaction 4-(phosphooxy)-L-threonine + 2-oxoglutarate = (R)-3-hydroxy-2-oxo-4-phosphooxybutanoate + L-glutamate. Its pathway is amino-acid biosynthesis; L-serine biosynthesis; L-serine from 3-phospho-D-glycerate: step 2/3. It functions in the pathway cofactor biosynthesis; pyridoxine 5'-phosphate biosynthesis; pyridoxine 5'-phosphate from D-erythrose 4-phosphate: step 3/5. Catalyzes the reversible conversion of 3-phosphohydroxypyruvate to phosphoserine and of 3-hydroxy-2-oxo-4-phosphonooxybutanoate to phosphohydroxythreonine. This Pseudomonas putida (strain ATCC 47054 / DSM 6125 / CFBP 8728 / NCIMB 11950 / KT2440) protein is Phosphoserine aminotransferase.